Reading from the N-terminus, the 153-residue chain is Probable histone H2A.4 (153 aa).

A compositionally biased stretch (basic residues) spans 1–12; that stretch reads MDSGTKVKKGAA. Disordered stretches follow at residues 1 to 30 and 129 to 153; these read MDSG…RSVK and KSEK…PKKS. The span at 133–147 shows a compositional bias: low complexity; the sequence is AASTTKTPKSPSKAT. The SPKK motif motif lies at 149–152; sequence SPKK.

The protein belongs to the histone H2A family. The nucleosome is a histone octamer containing two molecules each of H2A, H2B, H3 and H4 assembled in one H3-H4 heterotetramer and two H2A-H2B heterodimers. The octamer wraps approximately 147 bp of DNA. Not ubiquitinated.

Its subcellular location is the nucleus. It is found in the chromosome. Its function is as follows. Core component of nucleosome. Nucleosomes wrap and compact DNA into chromatin, limiting DNA accessibility to the cellular machineries which require DNA as a template. Histones thereby play a central role in transcription regulation, DNA repair, DNA replication and chromosomal stability. DNA accessibility is regulated via a complex set of post-translational modifications of histones, also called histone code, and nucleosome remodeling. The chain is Probable histone H2A.4 from Arabidopsis thaliana (Mouse-ear cress).